The following is a 151-amino-acid chain: S-protein homolog 1 (151 aa).

Residues methionine 1–threonine 18 form the signal peptide.

The protein belongs to the plant self-incompatibility (S1) protein family. As to expression, restricted to floral tissues.

Its subcellular location is the secreted. This chain is S-protein homolog 1, found in Arabidopsis thaliana (Mouse-ear cress).